The following is a 278-amino-acid chain: 1-acyl-sn-glycerol-3-phosphate acyltransferase beta (278 aa).

The first 23 residues, 1-23 (MDPWPWLTAALLLLLLLVQLSRT), serve as a signal peptide directing secretion. Residues 24 to 29 (ARFYAK) lie on the Lumenal side of the membrane. A helical transmembrane segment spans residues 30 to 50 (VGLYCVLCLSFSAAASIVCLL). At 51-121 (RHGGRTVDNM…PKRCVQIAKR (71 aa)) the chain is on the cytoplasmic side. An HXXXXD motif motif is present at residues 98 to 103 (HQSILD). Residues 122-142 (ELMFTGPVGLIMYLGGVYFIN) form a helical membrane-spanning segment. The Lumenal portion of the chain corresponds to 143–278 (RQQARTAMSV…IKEPGVLPAQ (136 aa)). The EGTR motif signature appears at 172–175 (EGTR).

This sequence belongs to the 1-acyl-sn-glycerol-3-phosphate acyltransferase family. As to expression, expressed at high levels in the liver, at intermediate levels in the kidney, gut, heart and skeletal muscles. Undetectable in brain and spleen.

Its subcellular location is the endoplasmic reticulum membrane. The catalysed reaction is a 1-acyl-sn-glycero-3-phosphate + an acyl-CoA = a 1,2-diacyl-sn-glycero-3-phosphate + CoA. It catalyses the reaction 1-(9Z-octadecenoyl)-sn-glycero-3-phosphate + (9Z)-octadecenoyl-CoA = 1,2-di-(9Z-octadecenoyl)-sn-glycero-3-phosphate + CoA. It carries out the reaction 1-(9Z-octadecenoyl)-sn-glycero-3-phosphate + hexadecanoyl-CoA = 1-(9Z)-octadecenoyl-2-hexadecanoyl-sn-glycero-3-phosphate + CoA. The enzyme catalyses heptadecanoyl-CoA + 1-(9Z-octadecenoyl)-sn-glycero-3-phosphate = 1-(9Z)-octadecenoyl-2-heptadecanoyl-sn-glycero-3-phosphate + CoA. The catalysed reaction is 1-(9Z-octadecenoyl)-sn-glycero-3-phosphate + (9Z,12Z)-octadecadienoyl-CoA = 1-(9Z)-octadecenoyl-2-(9Z,12Z)-octadecadienoyl-sn-glycero-3-phosphate + CoA. It catalyses the reaction 1-(9Z-octadecenoyl)-sn-glycero-3-phosphate + tetradecanoyl-CoA = 1-(9Z)-octadecenoyl-2-tetradecanoyl-sn-glycero-3-phosphate + CoA. It carries out the reaction pentadecanoyl-CoA + 1-(9Z-octadecenoyl)-sn-glycero-3-phosphate = 1-(9Z)-octadecenoyl-2-pentadecanoyl-sn-glycero-3-phosphate + CoA. The enzyme catalyses 1-hexadecanoyl-sn-glycero-3-phosphate + (9Z)-octadecenoyl-CoA = 1-hexadecanoyl-2-(9Z-octadecenoyl)-sn-glycero-3-phosphate + CoA. The catalysed reaction is 1-tetradecanoyl-sn-glycerol 3-phosphate + (9Z)-octadecenoyl-CoA = 1-tetradecanoyl-2-(9Z)-octadecenoyl-sn-glycero-3-phosphate + CoA. It catalyses the reaction 1-(9Z,12Z,15Z)-octadecatrienoyl-sn-glycero-3-phosphate + (9Z)-octadecenoyl-CoA = 1-(9Z,12Z,15Z)-octadecatrienoyl-2-(9Z)-octadecenoyl-sn-glycero-3-phosphate + CoA. It carries out the reaction 1-(6Z,9Z,12Z-octadecatrienoyl)-sn-glycero-3-phosphate + (9Z)-octadecenoyl-CoA = (6Z,9Z,12Z)-octadecatrienoyl-2-(9Z)-octadecenoyl-sn-glycero-3-phosphate + CoA. The enzyme catalyses 1-eicosanoyl-sn-glycero-3-phosphate + (9Z)-octadecenoyl-CoA = 1-eicosanoyl-2-(9Z)-octadecenoyl-sn-glycero-3-phosphate + CoA. The catalysed reaction is 1-hexadecanoyl-sn-glycero-3-phosphate + octadecanoyl-CoA = 1-hexadecanoyl-2-octadecanoyl-sn-glycero-3-phosphate + CoA. It catalyses the reaction 1-hexadecanoyl-sn-glycero-3-phosphate + (5Z,8Z,11Z,14Z)-eicosatetraenoyl-CoA = 1-hexadecanoyl-2-(5Z,8Z,11Z,14Z-eicosatetraenoyl)-sn-glycero-3-phosphate + CoA. It carries out the reaction 1-hexadecanoyl-sn-glycero-3-phosphate + hexadecanoyl-CoA = 1,2-dihexadecanoyl-sn-glycero-3-phosphate + CoA. The enzyme catalyses 1-hexadecanoyl-sn-glycero-3-phosphate + tetradecanoyl-CoA = 1-hexadecanoyl-2-tetradecanoyl-sn-glycero-3-phosphate + CoA. The catalysed reaction is (11Z)-octadecenoyl-CoA + 1-(9Z-octadecenoyl)-sn-glycero-3-phosphate = 1-(9Z)-octadecenoyl-2-(11Z)-octadecenoyl-sn-glycero-3-phosphate + CoA. The protein operates within phospholipid metabolism; CDP-diacylglycerol biosynthesis; CDP-diacylglycerol from sn-glycerol 3-phosphate: step 2/3. Converts 1-acyl-sn-glycerol-3-phosphate (lysophosphatidic acid or LPA) into 1,2-diacyl-sn-glycerol-3-phosphate (phosphatidic acid or PA) by incorporating an acyl moiety at the sn-2 position of the glycerol backbone. This chain is 1-acyl-sn-glycerol-3-phosphate acyltransferase beta (Agpat2), found in Mus musculus (Mouse).